A 694-amino-acid polypeptide reads, in one-letter code: Polyribonucleotide nucleotidyltransferase (694 aa).

Mg(2+) contacts are provided by Asp485 and Asp491. One can recognise a KH domain in the interval 552–611; sequence PRIETMQIKPNKIATVIGPGGKQIRQIIEEAGVQIDINDSGLVSISASSPQAIEKAKSMI. The S1 motif domain occupies 621–689; sequence GKIYEGRVTS…EKGQYKLSHK (69 aa).

This sequence belongs to the polyribonucleotide nucleotidyltransferase family. Mg(2+) serves as cofactor.

It localises to the cytoplasm. It carries out the reaction RNA(n+1) + phosphate = RNA(n) + a ribonucleoside 5'-diphosphate. Its function is as follows. Involved in mRNA degradation. Catalyzes the phosphorolysis of single-stranded polyribonucleotides processively in the 3'- to 5'-direction. In Chlamydia caviae (strain ATCC VR-813 / DSM 19441 / 03DC25 / GPIC) (Chlamydophila caviae), this protein is Polyribonucleotide nucleotidyltransferase.